Consider the following 149-residue polypeptide: Small ribosomal subunit protein uS9 (149 aa).

It belongs to the universal ribosomal protein uS9 family.

It localises to the cytoplasm. The chain is Small ribosomal subunit protein uS9 (RPS16A) from Oryza sativa subsp. indica (Rice).